Reading from the N-terminus, the 107-residue chain is Flagellar transcriptional regulator FlhD (107 aa).

It belongs to the FlhD family. Homodimer; disulfide-linked. Forms a heterohexamer composed of two FlhC and four FlhD subunits. Each FlhC binds a FlhD dimer, forming a heterotrimer, and a hexamer assembles by dimerization of two heterotrimers.

It localises to the cytoplasm. Functions in complex with FlhC as a master transcriptional regulator that regulates transcription of several flagellar and non-flagellar operons by binding to their promoter region. Activates expression of class 2 flagellar genes, including fliA, which is a flagellum-specific sigma factor that turns on the class 3 genes. Also regulates genes whose products function in a variety of physiological pathways. This chain is Flagellar transcriptional regulator FlhD, found in Bordetella pertussis (strain Tohama I / ATCC BAA-589 / NCTC 13251).